We begin with the raw amino-acid sequence, 98 residues long: Co-chaperonin GroES (98 aa).

The interval 35–57 (EKPQEGKVISAGPGRVDDKGTRV) is disordered.

Belongs to the GroES chaperonin family. Heptamer of 7 subunits arranged in a ring. Interacts with the chaperonin GroEL.

It is found in the cytoplasm. In terms of biological role, together with the chaperonin GroEL, plays an essential role in assisting protein folding. The GroEL-GroES system forms a nano-cage that allows encapsulation of the non-native substrate proteins and provides a physical environment optimized to promote and accelerate protein folding. GroES binds to the apical surface of the GroEL ring, thereby capping the opening of the GroEL channel. This chain is Co-chaperonin GroES, found in Cutibacterium acnes (strain DSM 16379 / KPA171202) (Propionibacterium acnes).